The following is a 376-amino-acid chain: Succinyl-diaminopimelate desuccinylase (376 aa).

Histidine 67 contacts Zn(2+). Residue aspartate 69 is part of the active site. Residue aspartate 100 coordinates Zn(2+). The active-site Proton acceptor is glutamate 134. Residues glutamate 135, glutamate 163, and histidine 349 each contribute to the Zn(2+) site.

Belongs to the peptidase M20A family. DapE subfamily. In terms of assembly, homodimer. The cofactor is Zn(2+). It depends on Co(2+) as a cofactor.

The catalysed reaction is N-succinyl-(2S,6S)-2,6-diaminopimelate + H2O = (2S,6S)-2,6-diaminopimelate + succinate. The protein operates within amino-acid biosynthesis; L-lysine biosynthesis via DAP pathway; LL-2,6-diaminopimelate from (S)-tetrahydrodipicolinate (succinylase route): step 3/3. In terms of biological role, catalyzes the hydrolysis of N-succinyl-L,L-diaminopimelic acid (SDAP), forming succinate and LL-2,6-diaminopimelate (DAP), an intermediate involved in the bacterial biosynthesis of lysine and meso-diaminopimelic acid, an essential component of bacterial cell walls. In Haemophilus ducreyi (strain 35000HP / ATCC 700724), this protein is Succinyl-diaminopimelate desuccinylase.